A 101-amino-acid polypeptide reads, in one-letter code: Small ribosomal subunit protein uS14 (101 aa).

It belongs to the universal ribosomal protein uS14 family. As to quaternary structure, part of the 30S ribosomal subunit. Contacts proteins S3 and S10.

In terms of biological role, binds 16S rRNA, required for the assembly of 30S particles and may also be responsible for determining the conformation of the 16S rRNA at the A site. The polypeptide is Small ribosomal subunit protein uS14 (Actinobacillus succinogenes (strain ATCC 55618 / DSM 22257 / CCUG 43843 / 130Z)).